Here is a 270-residue protein sequence, read N- to C-terminus: Type III pantothenate kinase (270 aa).

Residue 19–26 participates in ATP binding; sequence DIGNTSTT. Substrate is bound by residues Y109 and 116 to 119; that span reads GADR. The active-site Proton acceptor is D118. D139 provides a ligand contact to K(+). T142 contributes to the ATP binding site. T194 contacts substrate.

Belongs to the type III pantothenate kinase family. As to quaternary structure, homodimer. Requires NH4(+) as cofactor. It depends on K(+) as a cofactor.

The protein localises to the cytoplasm. It carries out the reaction (R)-pantothenate + ATP = (R)-4'-phosphopantothenate + ADP + H(+). It participates in cofactor biosynthesis; coenzyme A biosynthesis; CoA from (R)-pantothenate: step 1/5. Catalyzes the phosphorylation of pantothenate (Pan), the first step in CoA biosynthesis. The chain is Type III pantothenate kinase from Chlorobaculum tepidum (strain ATCC 49652 / DSM 12025 / NBRC 103806 / TLS) (Chlorobium tepidum).